Consider the following 291-residue polypeptide: N-acetylmannosamine kinase (291 aa).

ATP is bound by residues 5–12 (AVDIGGTK) and 132–139 (GVGGGIVV). Positions 156, 166, 168, and 173 each coordinate Zn(2+).

This sequence belongs to the ROK (NagC/XylR) family. NanK subfamily. In terms of assembly, homodimer.

It catalyses the reaction an N-acyl-D-mannosamine + ATP = an N-acyl-D-mannosamine 6-phosphate + ADP + H(+). The protein operates within amino-sugar metabolism; N-acetylneuraminate degradation; D-fructose 6-phosphate from N-acetylneuraminate: step 2/5. In terms of biological role, catalyzes the phosphorylation of N-acetylmannosamine (ManNAc) to ManNAc-6-P. This is N-acetylmannosamine kinase (nanK2) from Escherichia coli O6:H1 (strain CFT073 / ATCC 700928 / UPEC).